A 1476-amino-acid chain; its full sequence is SH3 and multiple ankyrin repeat domains protein 2 (1476 aa).

Residues 66 to 76 (LSPQLLQQTPS) are compositionally biased toward polar residues. Positions 66 to 134 (LSPQLLQQTP…GANKDSLSTF (69 aa)) are disordered. The SH3 domain occupies 147 to 206 (VPGRLFVAVKPYQPQVDGEIPLHRGDRVKVLSIGEGGFWEGSARGHIGWFPAECVEEVQC). Val162 is subject to Phosphoserine. One can recognise a PDZ domain in the interval 247–341 (TVVLQKKDNE…HLILKVVTVT (95 aa)). Ser372 carries the post-translational modification Phosphoserine. Residues 391 to 412 (RKKKDKPEEIVPASKPSRTAEN) form a disordered region. Position 456 is a phosphoserine (Ser456). At Thr485 the chain carries Phosphothreonine. The disordered stretch occupies residues 503–533 (LSMPDTSEDIPPPPQSVPPSPPPPSPTTYNC). Pro residues predominate over residues 512 to 528 (IPPPPQSVPPSPPPPSP). At Ser586 the chain carries Phosphoserine. Disordered regions lie at residues 659-916 (TIIV…KDRR), 946-983 (VPMA…TEGA), and 1057-1153 (PALA…ESMD). Over residues 666–678 (STSSSGKSSQGSS) the composition is skewed to low complexity. Positions 711–722 (VRDREKRLEARR) are enriched in basic and acidic residues. The residue at position 724 (Ser724) is a Phosphoserine. Over residues 783-795 (LGGGEAGAQGEAG) the composition is skewed to gly residues. The span at 833 to 846 (RLLDPSSPLALALS) shows a compositional bias: low complexity. 2 stretches are compositionally biased toward basic and acidic residues: residues 847-868 (ARDR…KADL) and 899-916 (RRQE…KDRR). At Thr903 the chain carries Phosphothreonine. Polar residues predominate over residues 1070–1085 (TSQPPTLNSSQPANST). Over residues 1119 to 1130 (VDSRSSSDHHLE) the composition is skewed to basic and acidic residues. A compositionally biased stretch (low complexity) spans 1131–1151 (TTSTISTVSSISTLSSEGGES). An SH3-binding motif is present at residues 1169 to 1175 (PPVPPKP). Disordered stretches follow at residues 1195–1216 (EDTD…SAQA) and 1260–1403 (NRGK…ISNK). Pro residues predominate over residues 1202–1212 (IPPPAPPPPPG). Residues 1291–1305 (STVSGTRSTTVTFTV) are compositionally biased toward low complexity. Residue Thr1292 is glycosylated (O-linked (GlcNAc) threonine). Positions 1307 to 1317 (PGTSQPITLQS) are enriched in polar residues. 2 positions are modified to phosphoserine: Ser1334 and Ser1338. The span at 1364-1375 (LSDVFSLPSQSP) shows a compositional bias: polar residues. Positions 1387 to 1401 (RSRSPSPSILQQPIS) are enriched in low complexity. The 64-residue stretch at 1413–1476 (WTKPDVADWL…ERALKQLLDR (64 aa)) folds into the SAM domain.

Belongs to the SHANK family. In terms of assembly, is part of a complex with DLG4/PSD-95 and DLGAP1/GKAP. Interacts with CTTN/cortactin SH3 domain, DLGAP1/GKAP and alpha-latrotoxin receptor 1. Interacts with DNM2, DBNL, GRID2, BAIAP2, SLC9A3, PLCB3 and CFTR. Interacts (via proline-rich region) with PDE4D. Interacts with ABI1 (via SH3 domain). In terms of tissue distribution, detected in brain (at protein level), where it is highly expressed in Purkinje cells.

The protein resides in the apical cell membrane. It localises to the cytoplasm. Its subcellular location is the synapse. It is found in the postsynaptic density. The protein localises to the cell projection. The protein resides in the dendritic spine. It localises to the growth cone. Functionally, seems to be an adapter protein in the postsynaptic density (PSD) of excitatory synapses that interconnects receptors of the postsynaptic membrane including NMDA-type and metabotropic glutamate receptors, and the actin-based cytoskeleton. May play a role in the structural and functional organization of the dendritic spine and synaptic junction. The protein is SH3 and multiple ankyrin repeat domains protein 2 (Shank2) of Mus musculus (Mouse).